A 299-amino-acid polypeptide reads, in one-letter code: Lipoyl synthase 2 (299 aa).

C43, C48, C54, C69, C73, C76, and S294 together coordinate [4Fe-4S] cluster. The Radical SAM core domain occupies Y55 to A283.

The protein belongs to the radical SAM superfamily. Lipoyl synthase family. The cofactor is [4Fe-4S] cluster.

The protein localises to the cytoplasm. The catalysed reaction is [[Fe-S] cluster scaffold protein carrying a second [4Fe-4S](2+) cluster] + N(6)-octanoyl-L-lysyl-[protein] + 2 oxidized [2Fe-2S]-[ferredoxin] + 2 S-adenosyl-L-methionine + 4 H(+) = [[Fe-S] cluster scaffold protein] + N(6)-[(R)-dihydrolipoyl]-L-lysyl-[protein] + 4 Fe(3+) + 2 hydrogen sulfide + 2 5'-deoxyadenosine + 2 L-methionine + 2 reduced [2Fe-2S]-[ferredoxin]. The protein operates within protein modification; protein lipoylation via endogenous pathway; protein N(6)-(lipoyl)lysine from octanoyl-[acyl-carrier-protein]: step 2/2. Catalyzes the radical-mediated insertion of two sulfur atoms into the C-6 and C-8 positions of the octanoyl moiety bound to the lipoyl domains of lipoate-dependent enzymes, thereby converting the octanoylated domains into lipoylated derivatives. In Parasynechococcus marenigrum (strain WH8102), this protein is Lipoyl synthase 2.